The primary structure comprises 361 residues: tRNA/tmRNA (uracil-C(5))-methyltransferase (361 aa).

Residues Q185, Y213, N218, E234, and D294 each coordinate S-adenosyl-L-methionine. C319 functions as the Nucleophile in the catalytic mechanism. Catalysis depends on E353, which acts as the Proton acceptor.

The protein belongs to the class I-like SAM-binding methyltransferase superfamily. RNA M5U methyltransferase family. TrmA subfamily.

It catalyses the reaction uridine(54) in tRNA + S-adenosyl-L-methionine = 5-methyluridine(54) in tRNA + S-adenosyl-L-homocysteine + H(+). It carries out the reaction uridine(341) in tmRNA + S-adenosyl-L-methionine = 5-methyluridine(341) in tmRNA + S-adenosyl-L-homocysteine + H(+). Dual-specificity methyltransferase that catalyzes the formation of 5-methyluridine at position 54 (m5U54) in all tRNAs, and that of position 341 (m5U341) in tmRNA (transfer-mRNA). The protein is tRNA/tmRNA (uracil-C(5))-methyltransferase of Pseudomonas putida (strain GB-1).